The primary structure comprises 1253 residues: Cytoplasmic FMR1-interacting protein 2 (1253 aa).

An N6-acetyllysine modification is found at lysine 1037.

It belongs to the CYFIP family. In terms of assembly, component of the WAVE1 complex composed of ABI2, CYFIP2, BRK1, NCKAP1 and WASF1/WAVE1. Interacts with RAC1 (activated form) which causes the complex to dissociate, releasing activated WASF1. The complex can also be activated by NCK1. Interacts with SHANK3; the interaction mediates the association of SHANK3 with the WAVE1 complex. Interacts with FMR1; the interaction occurs in a RNA-dependent manner. Interacts with FXR1 and FXR2. Interacts with TMEM108 (via N-terminus); the interaction associates TMEM108 with the WAVE1 complex.

It is found in the cytoplasm. The protein localises to the nucleus. It localises to the perinuclear region. Its subcellular location is the synapse. The protein resides in the synaptosome. In terms of biological role, involved in T-cell adhesion and p53-dependent induction of apoptosis. Does not bind RNA. As component of the WAVE1 complex, required for BDNF-NTRK2 endocytic trafficking and signaling from early endosomes. The polypeptide is Cytoplasmic FMR1-interacting protein 2 (Pongo abelii (Sumatran orangutan)).